Here is a 918-residue protein sequence, read N- to C-terminus: Isoleucine--tRNA ligase (918 aa).

The 'HIGH' region signature appears at 57–67 (PYANGHIHIGH). E564 contributes to the L-isoleucyl-5'-AMP binding site. The short motif at 605–609 (KMSKS) is the 'KMSKS' region element. K608 contributes to the ATP binding site. 4 residues coordinate Zn(2+): C888, C891, C903, and C906.

The protein belongs to the class-I aminoacyl-tRNA synthetase family. IleS type 1 subfamily. Monomer. Requires Zn(2+) as cofactor.

It is found in the cytoplasm. It carries out the reaction tRNA(Ile) + L-isoleucine + ATP = L-isoleucyl-tRNA(Ile) + AMP + diphosphate. In terms of biological role, catalyzes the attachment of isoleucine to tRNA(Ile). As IleRS can inadvertently accommodate and process structurally similar amino acids such as valine, to avoid such errors it has two additional distinct tRNA(Ile)-dependent editing activities. One activity is designated as 'pretransfer' editing and involves the hydrolysis of activated Val-AMP. The other activity is designated 'posttransfer' editing and involves deacylation of mischarged Val-tRNA(Ile). This chain is Isoleucine--tRNA ligase, found in Nitratiruptor sp. (strain SB155-2).